Reading from the N-terminus, the 374-residue chain is MSVPAFIDISEEDQAAELRAYLKSKGAELSEENSEGGLHVDLAQIIEACDVCLKEDDKDVESVMNSVVSLLLILEPDKQEALIESLCEKLVKFREGERPSLRLQLLSNLFHGMDKNTPVRYTVYCSLIKVAASCGAIQYIPTELDQVRKWISDWKLTTEKKHTLLRLLYEALVDCKKSDAASKVMVELLGSYTEDNASQARVDAHRCIVRALKDPNAFLFDHLLTLKPVKFLEGELIHDLLTIFVSAKLASYVKFYQNNKDFIDSLGLLHEQNMAKMRLLTFMGMAVENKEISFDTMQQELQIGADDVEAFVIDAVRTKMVYCKIDQTQRKVVVSHSTHRTFGKQQWQQLYDTLNAWKQNLNKVKNSLLSLSDT.

Ser-2 carries the post-translational modification N-acetylserine. Ser-2 and Ser-152 each carry phosphoserine. The PCI domain maps to 180–339 (AASKVMVELL…RKVVVSHSTH (160 aa)). Residue Lys-254 is modified to N6-acetyllysine. Position 367 is a phosphoserine (Ser-367).

Belongs to the eIF-3 subunit M family. As to quaternary structure, component of the eukaryotic translation initiation factor 3 (eIF-3) complex, which is composed of 13 subunits: EIF3A, EIF3B, EIF3C, EIF3D, EIF3E, EIF3F, EIF3G, EIF3H, EIF3I, EIF3J, EIF3K, EIF3L and EIF3M. The eIF-3 complex appears to include 3 stable modules: module A is composed of EIF3A, EIF3B, EIF3G and EIF3I; module B is composed of EIF3F, EIF3H, and EIF3M; and module C is composed of EIF3C, EIF3D, EIF3E, EIF3K and EIF3L. EIF3C of module C binds EIF3B of module A and EIF3H of module B, thereby linking the three modules. EIF3J is a labile subunit that binds to the eIF-3 complex via EIF3B. The eIF-3 complex interacts with RPS6KB1 under conditions of nutrient depletion. Mitogenic stimulation leads to binding and activation of a complex composed of MTOR and RPTOR, leading to phosphorylation and release of RPS6KB1 and binding of EIF4B to eIF-3.

The protein resides in the cytoplasm. Functionally, component of the eukaryotic translation initiation factor 3 (eIF-3) complex, which is required for several steps in the initiation of protein synthesis. The eIF-3 complex associates with the 40S ribosome and facilitates the recruitment of eIF-1, eIF-1A, eIF-2:GTP:methionyl-tRNAi and eIF-5 to form the 43S pre-initiation complex (43S PIC). The eIF-3 complex stimulates mRNA recruitment to the 43S PIC and scanning of the mRNA for AUG recognition. The eIF-3 complex is also required for disassembly and recycling of post-termination ribosomal complexes and subsequently prevents premature joining of the 40S and 60S ribosomal subunits prior to initiation. The eIF-3 complex specifically targets and initiates translation of a subset of mRNAs involved in cell proliferation, including cell cycling, differentiation and apoptosis, and uses different modes of RNA stem-loop binding to exert either translational activation or repression. The sequence is that of Eukaryotic translation initiation factor 3 subunit M (Eif3m) from Mus musculus (Mouse).